The chain runs to 172 residues: Ribosome maturation factor RimM (172 aa).

The PRC barrel domain occupies 96 to 169 (PDEFYDHQLE…AIEIDPPEGL (74 aa)).

It belongs to the RimM family. In terms of assembly, binds ribosomal protein uS19.

It localises to the cytoplasm. Its function is as follows. An accessory protein needed during the final step in the assembly of 30S ribosomal subunit, possibly for assembly of the head region. Essential for efficient processing of 16S rRNA. May be needed both before and after RbfA during the maturation of 16S rRNA. It has affinity for free ribosomal 30S subunits but not for 70S ribosomes. In Mycolicibacterium vanbaalenii (strain DSM 7251 / JCM 13017 / BCRC 16820 / KCTC 9966 / NRRL B-24157 / PYR-1) (Mycobacterium vanbaalenii), this protein is Ribosome maturation factor RimM.